The sequence spans 382 residues: Flap endonuclease 1 (382 aa).

The interval methionine 1–arginine 104 is N-domain. Position 34 (aspartate 34) interacts with Mg(2+). Arginine 47 and arginine 70 together coordinate DNA. Positions 86, 158, 160, 179, and 181 each coordinate Mg(2+). The I-domain stretch occupies residues glutamate 122–histidine 253. Glutamate 158 serves as a coordination point for DNA. DNA-binding residues include glycine 231 and aspartate 233. A Mg(2+)-binding site is contributed by aspartate 233. An interaction with PCNA region spans residues threonine 336–phenylalanine 344. The interval lysine 358–lysine 382 is disordered. Over residues arginine 359 to lysine 368 the composition is skewed to basic and acidic residues. Residues lysine 369–lysine 382 are compositionally biased toward basic residues.

It belongs to the XPG/RAD2 endonuclease family. FEN1 subfamily. As to quaternary structure, interacts with PCNA. Three molecules of crn-1 bind to one PCNA trimer with each molecule binding to one PCNA monomer. PCNA stimulates the nuclease activity without altering cleavage specificity. Interacts with cps-6. Requires Mg(2+) as cofactor. Post-translationally, phosphorylated. Phosphorylation upon DNA damage induces relocalization to the nuclear plasma.

Its subcellular location is the nucleus. The protein resides in the nucleolus. It localises to the nucleoplasm. The protein localises to the mitochondrion. In terms of biological role, structure-specific nuclease with 5'-flap endonuclease and 5'-3' exonuclease activities involved in DNA replication and repair. During DNA replication, cleaves the 5'-overhanging flap structure that is generated by displacement synthesis when DNA polymerase encounters the 5'-end of a downstream Okazaki fragment. It enters the flap from the 5'-end and then tracks to cleave the flap base, leaving a nick for ligation. Also involved in the long patch base excision repair (LP-BER) pathway, by cleaving within the apurinic/apyrimidinic (AP) site-terminated flap. Acts as a genome stabilization factor that prevents flaps from equilibrating into structures that lead to duplications and deletions. Also possesses 5'-3' exonuclease activity on nicked or gapped double-stranded DNA, and exhibits RNase H activity. Also involved in replication and repair of rDNA and in repairing mitochondrial DNA. Can associate and cooperate with cps-6 to promote stepwise DNA fragmentation, utilizing the endonuclease activity of cps-6 and both of its own 5'-3' exonuclease activity and gap-dependent endonuclease activity. May play a critical role in switching the state of cells from DNA replication/repair to DNA degradation during apoptosis. This is Flap endonuclease 1 from Caenorhabditis elegans.